The primary structure comprises 1243 residues: Serine/threonine-protein kinase WNK4 (1243 aa).

The segment covering 1 to 17 (MLASPATETTVLMSQTE) has biased composition (polar residues). Residues 1–142 (MLASPATETT…GPGSREPLRV (142 aa)) form a disordered region. Residues 65-77 (VDLGLLSSWSLPA) show a composition bias toward low complexity. The span at 78 to 103 (SPAPDPPDPPDSAGPGPARSPPPSSK) shows a compositional bias: pro residues. Residue S97 is modified to Phosphoserine. Basic and acidic residues predominate over residues 118-127 (AAEDSARPEL). Residues K157 and K175 each participate in a glycyl lysine isopeptide (Lys-Gly) (interchain with G-Cter in ubiquitin) cross-link. The region spanning 174-432 (LKFDIEIGRG…IQDLLAHAFF (259 aa)) is the Protein kinase domain. ATP is bound at residue S184. Glycyl lysine isopeptide (Lys-Gly) (interchain with G-Cter in ubiquitin) cross-links involve residues K186, K226, and K241. ATP is bound by residues 254–257 (TELM) and K304. D321 functions as the Proton acceptor in the catalytic mechanism. A Glycyl lysine isopeptide (Lys-Gly) (interchain with G-Cter in ubiquitin) cross-link involves residue K328. 2 positions are modified to phosphoserine; by autocatalysis: S331 and S335. Glycyl lysine isopeptide (Lys-Gly) (interchain with G-Cter in ubiquitin) cross-links involve residues K387, K393, K450, and K454. Residues 526-564 (KARELEALPPEPGPPPATVPMAPGPPSVFPPEPEEPEAD) are disordered. Pro residues predominate over residues 534–556 (PPEPGPPPATVPMAPGPPSVFPP). Residues 557–567 (EPEEPEADQHQ) form an interaction with KLHL3 region. Position 575 is a phosphoserine (S575). The span at 630–641 (SGPGSDFSPGDS) shows a compositional bias: low complexity. Disordered stretches follow at residues 630 to 683 (SGPG…SVSD), 751 to 871 (DTGP…STPE), and 943 to 1110 (SPSP…SPVW). Residues 663 to 676 (PPGRNLRRRPRSRL) are compositionally biased toward basic residues. Residues 767–780 (EPAPLPALPVPLPD) show a composition bias toward pro residues. The span at 797–812 (WTAFSTSSSSPGTPLS) shows a compositional bias: low complexity. Pro residues predominate over residues 822-843 (PISPGPIFPITSPPCHPSPSPF). 3 stretches are compositionally biased toward low complexity: residues 844-854 (SPISSQVSSNP), 862-871 (PLPFSSSTPE), and 943-952 (SPSPGLLSQS). The span at 953-970 (PPAPPSPLPSLPLPPPVA) shows a compositional bias: pro residues. A Glycyl lysine isopeptide (Lys-Gly) (interchain with G-Cter in ubiquitin) cross-link involves residue K1010. The short motif at 1016–1019 (RFQV) is the RFXV motif element. S1035 is subject to Phosphoserine. Over residues 1065–1077 (ETREALAESDRAA) the composition is skewed to basic and acidic residues. Glycyl lysine isopeptide (Lys-Gly) (interchain with G-Cter in ubiquitin) cross-links involve residues K1144, K1157, and K1158. Residues 1166–1243 (RLGKQPPPGI…VTFAGDVGRM (78 aa)) are disordered. Polar residues-rich tracts occupy residues 1193 to 1204 (SFPTSRRNSLQR) and 1216 to 1228 (NSLS…SQEQ). S1217 is modified (phosphoserine).

It belongs to the protein kinase superfamily. Ser/Thr protein kinase family. WNK subfamily. Interacts with the C-terminal region of KCNJ1. Mg(2+) is required as a cofactor. Autophosphorylated at Ser-331 and Ser-335, promoting its activation. Phosphorylated by WNK1 and WNK3. Phosphorylated at Ser-575 in a MAP3K15/ASK3-dependent process in response to osmotic stress or hypotonic low-chloride stimulation. In terms of processing, ubiquitinated by the BCR(KLHL3) complex, leading to its degradation. Also ubiquitinated by the BCR(KLHL2) complex. Expressed in kidney, colon and skin.

Its subcellular location is the cell junction. It localises to the tight junction. The catalysed reaction is L-seryl-[protein] + ATP = O-phospho-L-seryl-[protein] + ADP + H(+). It catalyses the reaction L-threonyl-[protein] + ATP = O-phospho-L-threonyl-[protein] + ADP + H(+). Activation requires autophosphorylation of Ser-331 and Ser-335. Autophosphorylation and subsequent activation is inhibited by increases in intracellular ionic strength: Cl(-) potently inhibits WNK4 kinase activity via direct binding. Also inhibited by K(+) ions. Its function is as follows. Serine/threonine-protein kinase component of the WNK4-SPAK/OSR1 kinase cascade, which acts as a key regulator of ion transport in the distal nephron and blood pressure. The WNK4-SPAK/OSR1 kinase cascade is composed of WNK4, which mediates phosphorylation and activation of downstream kinases OXSR1/OSR1 and STK39/SPAK. Following activation, OXSR1/OSR1 and STK39/SPAK catalyze phosphorylation of ion cotransporters, such as SLC12A1/NKCC2, SLC12A2/NKCC1, SLC12A3/NCC, SLC12A5/KCC2 or SLC12A6/KCC3, regulating their activity. Acts as a molecular switch that regulates the balance between renal salt reabsorption and K(+) secretion by modulating the activities of renal transporters and channels, including the Na-Cl cotransporter SLC12A3/NCC and the K(+) channel, KCNJ1/ROMK. Regulates NaCl reabsorption in the distal nephron by activating the thiazide-sensitive Na-Cl cotransporter SLC12A3/NCC in distal convoluted tubule cells of kidney: activates SLC12A3/NCC in a OXSR1/OSR1- and STK39/SPAK-dependent process. Also acts as a scaffold protein independently of its protein kinase activity: negatively regulates cell membrane localization of various transporters and channels (CFTR, KCNJ1/ROMK, SLC4A4, SLC26A9 and TRPV4) by clathrin-dependent endocytosis. Also inhibits the activity of the epithelial Na(+) channel (ENaC) SCNN1A, SCNN1B, SCNN1D in a inase-independent mechanism. May also phosphorylate NEDD4L. The protein is Serine/threonine-protein kinase WNK4 of Homo sapiens (Human).